The sequence spans 249 residues: tRNA (guanine-N(1)-)-methyltransferase (249 aa).

Residues Gly112 and 132-137 (LGDFVL) each bind S-adenosyl-L-methionine.

The protein belongs to the RNA methyltransferase TrmD family. As to quaternary structure, homodimer.

The protein resides in the cytoplasm. It catalyses the reaction guanosine(37) in tRNA + S-adenosyl-L-methionine = N(1)-methylguanosine(37) in tRNA + S-adenosyl-L-homocysteine + H(+). In terms of biological role, specifically methylates guanosine-37 in various tRNAs. The sequence is that of tRNA (guanine-N(1)-)-methyltransferase from Citrifermentans bemidjiense (strain ATCC BAA-1014 / DSM 16622 / JCM 12645 / Bem) (Geobacter bemidjiensis).